The primary structure comprises 125 residues: Small ribosomal subunit protein uS12m (125 aa).

The segment at 1 to 50 (MPSLNQLIRHGREEKRRTDRTRALDQCPQKQGVCPRVSTRTPKKPNSAPR) is disordered. Residues 10-23 (HGREEKRRTDRTRA) show a composition bias toward basic and acidic residues.

The protein belongs to the universal ribosomal protein uS12 family.

The protein localises to the mitochondrion. In terms of biological role, protein S12 is involved in the translation initiation step. The chain is Small ribosomal subunit protein uS12m (RPS12) from Petunia hybrida (Petunia).